We begin with the raw amino-acid sequence, 354 residues long: 5,10-methenyltetrahydromethanopterin hydrogenase (354 aa).

The protein belongs to the HMD family.

The catalysed reaction is 5,10-methenyl-5,6,7,8-tetrahydromethanopterin + H2 = 5,10-methylenetetrahydromethanopterin + H(+). Its pathway is one-carbon metabolism; methanogenesis from CO(2); 5,10-methylene-5,6,7,8-tetrahydromethanopterin from 5,10-methenyl-5,6,7,8-tetrahydromethanopterin (hydrogen route): step 1/1. Its function is as follows. Catalyzes the reversible reduction of methenyl-H(4)MPT(+) to methylene-H(4)MPT. The polypeptide is 5,10-methenyltetrahydromethanopterin hydrogenase (Methanococcus vannielii (strain ATCC 35089 / DSM 1224 / JCM 13029 / OCM 148 / SB)).